The primary structure comprises 132 residues: Small ribosomal subunit protein uS8 (132 aa).

The protein belongs to the universal ribosomal protein uS8 family. Part of the 30S ribosomal subunit. Contacts proteins S5 and S12.

Its function is as follows. One of the primary rRNA binding proteins, it binds directly to 16S rRNA central domain where it helps coordinate assembly of the platform of the 30S subunit. This Desulfitobacterium hafniense (strain DSM 10664 / DCB-2) protein is Small ribosomal subunit protein uS8.